The following is a 270-amino-acid chain: MHALGRTPALTLLIFINIFVSGSRCTDKNQTIQNDSSSPLTQVNTTVSVQIGTKALLCCFSIPLTKAVLITWIIKLRDLPSCTILYKVDTKTIETSCLDRNITWASTPDHSPELQISAVTLQHEGTYTCETVTPEGNFGRVYDLQVLVPPEVTYFPGKNRTAVCEAMAGKPAAQISWTPDGDCVTTSESHSNGTVTVRSTCHWEQNNVSAVSCIVSHSTGNKSLFIELNQGSTTTTTSLLTILYVKMVLLGIILLHVGFAFFQKRNVIRT.

The first 25 residues, 1 to 25 (MHALGRTPALTLLIFINIFVSGSRC), serve as a signal peptide directing secretion. Residues 26 to 241 (TDKNQTIQND…STTTTTSLLT (216 aa)) are Extracellular-facing. The Ig-like V-type domain maps to 39–145 (PLTQVNTTVS…GNFGRVYDLQ (107 aa)). A glycan (N-linked (GlcNAc...) asparagine) is linked at asparagine 44. 2 cysteine pairs are disulfide-bonded: cysteine 59/cysteine 129 and cysteine 164/cysteine 213. The Ig-like C2-type domain maps to 134–229 (PEGNFGRVYD…GNKSLFIELN (96 aa)). 2 N-linked (GlcNAc...) asparagine glycosylation sites follow: asparagine 192 and asparagine 221. Residues 242 to 262 (ILYVKMVLLGIILLHVGFAFF) traverse the membrane as a helical segment. Residues 263–270 (QKRNVIRT) lie on the Cytoplasmic side of the membrane.

The protein belongs to the CD200R family.

It is found in the membrane. May not be a receptor for the CD200/OX2 cell surface glycoprotein. This Mus musculus (Mouse) protein is Cell surface glycoprotein CD200 receptor 5 (Cd200r5).